Reading from the N-terminus, the 615-residue chain is 1-deoxy-D-xylulose-5-phosphate synthase (615 aa).

Thiamine diphosphate contacts are provided by residues His-72 and 113–115 (GHA). Position 144 (Asp-144) interacts with Mg(2+). Thiamine diphosphate-binding positions include 145–146 (GA), Asn-173, Tyr-281, and Glu-360. Residue Asn-173 participates in Mg(2+) binding.

This sequence belongs to the transketolase family. DXPS subfamily. Homodimer. Requires Mg(2+) as cofactor. Thiamine diphosphate serves as cofactor.

The enzyme catalyses D-glyceraldehyde 3-phosphate + pyruvate + H(+) = 1-deoxy-D-xylulose 5-phosphate + CO2. It participates in metabolic intermediate biosynthesis; 1-deoxy-D-xylulose 5-phosphate biosynthesis; 1-deoxy-D-xylulose 5-phosphate from D-glyceraldehyde 3-phosphate and pyruvate: step 1/1. Functionally, catalyzes the acyloin condensation reaction between C atoms 2 and 3 of pyruvate and glyceraldehyde 3-phosphate to yield 1-deoxy-D-xylulose-5-phosphate (DXP). This is 1-deoxy-D-xylulose-5-phosphate synthase from Thermus thermophilus (strain ATCC 27634 / DSM 579 / HB8).